The following is a 78-amino-acid chain: D-alanyl carrier protein (78 aa).

Residues 1–78 enclose the Carrier domain; that stretch reads MEFKNQVYGI…HIAEQLAEMK (78 aa). At serine 36 the chain carries O-(pantetheine 4'-phosphoryl)serine.

This sequence belongs to the DltC family. 4'-phosphopantetheine is transferred from CoA to a specific serine of apo-DCP.

The protein localises to the cytoplasm. The protein operates within cell wall biogenesis; lipoteichoic acid biosynthesis. Its function is as follows. Carrier protein involved in the D-alanylation of lipoteichoic acid (LTA). The loading of thioester-linked D-alanine onto DltC is catalyzed by D-alanine--D-alanyl carrier protein ligase DltA. The DltC-carried D-alanyl group is further transferred to cell membrane phosphatidylglycerol (PG) by forming an ester bond, probably catalyzed by DltD. D-alanylation of LTA plays an important role in modulating the properties of the cell wall in Gram-positive bacteria, influencing the net charge of the cell wall. The chain is D-alanyl carrier protein from Bacillus pumilus (strain SAFR-032).